A 70-amino-acid chain; its full sequence is MAAIRNLLILTMLLIVCVSWNADAAPGAAPSIALDKRANENFSLREQEQPICEHCWKQPPPRRCPKFCLE.

The signal sequence occupies residues M1–A24.

Belongs to the scoloptoxin-04 family. Post-translationally, contains 2 disulfide bonds. As to expression, expressed by the venom gland.

Its subcellular location is the secreted. The chain is U-scoloptoxin(04)-Er3a from Ethmostigmus rubripes (Giant centipede).